Here is a 954-residue protein sequence, read N- to C-terminus: Valine--tRNA ligase (954 aa).

Positions 48 to 58 (PNVTGSLHMGH) match the 'HIGH' region motif. The 'KMSKS' region motif lies at 560–564 (KMSKS). Lys-563 contributes to the ATP binding site. The stretch at 883-953 (AGFINKEAEL…IQEQYKAIEA (71 aa)) forms a coiled coil.

This sequence belongs to the class-I aminoacyl-tRNA synthetase family. ValS type 1 subfamily. In terms of assembly, monomer.

Its subcellular location is the cytoplasm. The catalysed reaction is tRNA(Val) + L-valine + ATP = L-valyl-tRNA(Val) + AMP + diphosphate. Catalyzes the attachment of valine to tRNA(Val). As ValRS can inadvertently accommodate and process structurally similar amino acids such as threonine, to avoid such errors, it has a 'posttransfer' editing activity that hydrolyzes mischarged Thr-tRNA(Val) in a tRNA-dependent manner. The protein is Valine--tRNA ligase of Haemophilus influenzae (strain PittEE).